A 980-amino-acid polypeptide reads, in one-letter code: Putative leucine-rich repeat receptor-like serine/threonine-protein kinase At2g24130 (980 aa).

An N-terminal signal peptide occupies residues 1–20; the sequence is MDYCSLLVVSFLITVMTVLA. Residues 21 to 593 are Extracellular-facing; that stretch reads SKENDHELIK…ACKKKHKYPS (573 aa). 2 N-linked (GlcNAc...) asparagine glycosylation sites follow: Asn55 and Asn88. LRR repeat units lie at residues 65–89, 90–113, 115–138, 139–162, 165–189, 191–214, 215–238, and 240–263; these read STQV…IANL, TGLT…IGSL, ETLK…LGLL, NRLV…LFCN, SSSL…YHCH, KELR…LSNS, TNLK…VISK, and PQLQ…NLEP. Asn152, Asn162, Asn175, and Asn213 each carry an N-linked (GlcNAc...) asparagine glycan. Asn257 and Asn270 each carry an N-linked (GlcNAc...) asparagine glycan. LRR repeat units lie at residues 271-295, 296-320, 322-344, 345-370, 372-391, 392-416, 417-440, 442-463, 464-490, 491-514, 515-537, and 539-563; these read SSDL…VRHL, SVNL…ISNL, NLTL…LCKL, SKLE…DIPR, GLLD…SFGN, LSQL…LGKC, INLE…VVSN, RNLK…PLEL, SKMD…LGSC, IALE…LGQL, PYLK…SFQQ, and STLK…SFSK. 2 N-linked (GlcNAc...) asparagine glycosylation sites follow: Asn322 and Asn327. Residues Asn380 and Asn391 are each glycosylated (N-linked (GlcNAc...) asparagine). 2 N-linked (GlcNAc...) asparagine glycosylation sites follow: Asn428 and Asn449. Asn497 is a glycosylation site (N-linked (GlcNAc...) asparagine). N-linked (GlcNAc...) asparagine glycosylation is found at Asn545 and Asn554. The helical transmembrane segment at 594–614 threads the bilayer; it reads VLLPVLLSLIATPVLCVFGYP. The Cytoplasmic segment spans residues 615 to 980; that stretch reads LVQRSRFGKN…SQETQGEASS (366 aa). At Thr658 the chain carries Phosphothreonine. One can recognise a Protein kinase domain in the interval 661–960; sequence FNASSLIGSG…HEMGRLKEYL (300 aa). ATP is bound by residues 667-675 and Lys689; that span reads IGSGRFGHV. Tyr775 is subject to Phosphotyrosine. The active-site Proton acceptor is Asp788. Tyr841 carries the phosphotyrosine modification.

Belongs to the protein kinase superfamily. Ser/Thr protein kinase family.

Its subcellular location is the cell membrane. The enzyme catalyses L-seryl-[protein] + ATP = O-phospho-L-seryl-[protein] + ADP + H(+). The catalysed reaction is L-threonyl-[protein] + ATP = O-phospho-L-threonyl-[protein] + ADP + H(+). This Arabidopsis thaliana (Mouse-ear cress) protein is Putative leucine-rich repeat receptor-like serine/threonine-protein kinase At2g24130.